Consider the following 120-residue polypeptide: Flagellar protein FliT (120 aa).

The required for homodimerization stretch occupies residues 1-50 (MNDFISSLNNWQALYALSNTMLSLANSGQWDELIEQEVKYVTLVEAIARN). Residues 59-97 (FQEKARELLTKVLANEAALKIKLQARMEELRVLIEQNGN) form a fliD binding region.

It belongs to the FliT family. In terms of assembly, homodimer. Interacts with FliD and FlhC.

It localises to the cytoplasm. The protein localises to the cytosol. Functionally, dual-function protein that regulates the transcription of class 2 flagellar operons and that also acts as an export chaperone for the filament-capping protein FliD. As a transcriptional regulator, acts as an anti-FlhDC factor; it directly binds FlhC, thus inhibiting the binding of the FlhC/FlhD complex to class 2 promoters, resulting in decreased expression of class 2 flagellar operons. As a chaperone, effects FliD transition to the membrane by preventing its premature polymerization, and by directing it to the export apparatus. The chain is Flagellar protein FliT from Cronobacter sakazakii (strain ATCC BAA-894) (Enterobacter sakazakii).